Consider the following 395-residue polypeptide: Probable G-protein coupled receptor npr-29 (395 aa).

Transmembrane regions (helical) follow at residues 38–58 (VVGF…LFAP), 66–86 (ILFY…AMLL), 89–109 (IELV…YLIF), and 148–168 (AIIQ…PVFA). Asparagine 180 carries N-linked (GlcNAc...) asparagine glycosylation. The next 3 helical transmembrane spans lie at 202-222 (FWFN…GIIY), 252-272 (VITT…PYWV), and 287-307 (IIII…AYPL).

Belongs to the G-protein coupled receptor 1 family.

The protein resides in the cell membrane. Its function is as follows. Not known. Putative receptor. The chain is Probable G-protein coupled receptor npr-29 from Caenorhabditis elegans.